Consider the following 330-residue polypeptide: AA9 family lytic polysaccharide monooxygenase E (330 aa).

The N-terminal stretch at 1–20 is a signal peptide; sequence MRSTLVTGLIAGLLSQQAAA. Cu(2+) contacts are provided by H21 and H99. C58 and C193 are disulfide-bonded. H179 and Q188 together coordinate O2. Y190 provides a ligand contact to Cu(2+). Positions 293 to 330 constitute a CBM1 domain; sequence CSVAKYQQCGGTGYTGCTSCASGSTCSAVSPPYYSQCV.

It belongs to the polysaccharide monooxygenase AA9 family. It depends on Cu(2+) as a cofactor.

Its subcellular location is the secreted. The catalysed reaction is [(1-&gt;4)-beta-D-glucosyl]n+m + reduced acceptor + O2 = 4-dehydro-beta-D-glucosyl-[(1-&gt;4)-beta-D-glucosyl]n-1 + [(1-&gt;4)-beta-D-glucosyl]m + acceptor + H2O.. In terms of biological role, lytic polysaccharide monooxygenase (LPMO) that depolymerizes crystalline and amorphous polysaccharides via the oxidation of scissile alpha- or beta-(1-4)-glycosidic bonds, yielding exclusively C1 oxidation products. Catalysis by LPMOs requires the reduction of the active-site copper from Cu(II) to Cu(I) by a reducing agent and H(2)O(2) or O(2) as a cosubstrate. This is AA9 family lytic polysaccharide monooxygenase E (gh61-5) from Neurospora crassa (strain ATCC 24698 / 74-OR23-1A / CBS 708.71 / DSM 1257 / FGSC 987).